Reading from the N-terminus, the 321-residue chain is Phospho-N-acetylmuramoyl-pentapeptide-transferase (321 aa).

10 consecutive transmembrane segments (helical) span residues Met-1–Ile-21, Met-50–Val-70, Ile-76–Ile-96, Phe-112–Val-132, Ile-140–Leu-160, Gly-176–Leu-196, Ala-200–Ile-220, Val-225–Met-245, Leu-250–Val-270, and Val-300–Val-320.

The protein belongs to the glycosyltransferase 4 family. MraY subfamily. Requires Mg(2+) as cofactor.

The protein resides in the cell membrane. It carries out the reaction UDP-N-acetyl-alpha-D-muramoyl-L-alanyl-gamma-D-glutamyl-L-lysyl-D-alanyl-D-alanine + di-trans,octa-cis-undecaprenyl phosphate = Mur2Ac(oyl-L-Ala-gamma-D-Glu-L-Lys-D-Ala-D-Ala)-di-trans,octa-cis-undecaprenyl diphosphate + UMP. Its pathway is cell wall biogenesis; peptidoglycan biosynthesis. Its function is as follows. Catalyzes the initial step of the lipid cycle reactions in the biosynthesis of the cell wall peptidoglycan: transfers peptidoglycan precursor phospho-MurNAc-pentapeptide from UDP-MurNAc-pentapeptide onto the lipid carrier undecaprenyl phosphate, yielding undecaprenyl-pyrophosphoryl-MurNAc-pentapeptide, known as lipid I. In Staphylococcus aureus (strain bovine RF122 / ET3-1), this protein is Phospho-N-acetylmuramoyl-pentapeptide-transferase.